The primary structure comprises 531 residues: Maturase K (531 aa).

This sequence belongs to the intron maturase 2 family. MatK subfamily.

It is found in the plastid. Its subcellular location is the chloroplast. Functionally, usually encoded in the trnK tRNA gene intron. Probably assists in splicing its own and other chloroplast group II introns. This Ephedra sinica (Chinese ephedra) protein is Maturase K.